The sequence spans 309 residues: ATP synthase gamma chain (309 aa).

Belongs to the ATPase gamma chain family. In terms of assembly, F-type ATPases have 2 components, CF(1) - the catalytic core - and CF(0) - the membrane proton channel. CF(1) has five subunits: alpha(3), beta(3), gamma(1), delta(1), epsilon(1). CF(0) has three main subunits: a, b and c.

The protein resides in the cell membrane. Produces ATP from ADP in the presence of a proton gradient across the membrane. The gamma chain is believed to be important in regulating ATPase activity and the flow of protons through the CF(0) complex. The protein is ATP synthase gamma chain of Mycolicibacterium gilvum (strain PYR-GCK) (Mycobacterium gilvum (strain PYR-GCK)).